An 88-amino-acid chain; its full sequence is MLDTKFDELMEFPCSFPYKVVGDASETLADRVVAVVQKHVPGDYVPSSKVSSKGTYNSITIRVTVQSKEQVESLYIDLAAIEGVKRVL.

This sequence belongs to the UPF0250 family.

The sequence is that of UPF0250 protein Swoo_3713 from Shewanella woodyi (strain ATCC 51908 / MS32).